A 79-amino-acid polypeptide reads, in one-letter code: Cytochrome b (79 aa).

The next 3 membrane-spanning stretches (helical) occupy residues 1-7 (TALLLAA), 31-52 (WLIR…YLHI), and 67-79 (WNIG…TLMA). 2 residues coordinate heme b: H37 and H51.

The protein belongs to the cytochrome b family. As to quaternary structure, the cytochrome bc1 complex contains 11 subunits: 3 respiratory subunits (MT-CYB, CYC1 and UQCRFS1), 2 core proteins (UQCRC1 and UQCRC2) and 6 low-molecular weight proteins (UQCRH/QCR6, UQCRB/QCR7, UQCRQ/QCR8, UQCR10/QCR9, UQCR11/QCR10 and a cleavage product of UQCRFS1). This cytochrome bc1 complex then forms a dimer. Heme b serves as cofactor.

It localises to the mitochondrion inner membrane. Functionally, component of the ubiquinol-cytochrome c reductase complex (complex III or cytochrome b-c1 complex) that is part of the mitochondrial respiratory chain. The b-c1 complex mediates electron transfer from ubiquinol to cytochrome c. Contributes to the generation of a proton gradient across the mitochondrial membrane that is then used for ATP synthesis. The polypeptide is Cytochrome b (MT-CYB) (Pomatostomus superciliosus (White-browed babbler)).